Consider the following 48-residue polypeptide: Small, acid-soluble spore protein P (48 aa).

Over residues 1-12 the composition is skewed to basic and acidic residues; the sequence is MTNKNDGKDMRK. A disordered region spans residues 1-48; sequence MTNKNDGKDMRKNAPKGDNPGQPEPLDGSKKVKNRNHTRQKHNTSHDM. The segment covering 31–48 has biased composition (basic residues); that stretch reads KVKNRNHTRQKHNTSHDM.

The protein belongs to the SspP family.

It localises to the spore core. The sequence is that of Small, acid-soluble spore protein P from Geobacillus kaustophilus (strain HTA426).